A 278-amino-acid polypeptide reads, in one-letter code: Phosphatidylglycerol--prolipoprotein diacylglyceryl transferase (278 aa).

The next 4 membrane-spanning stretches (helical) occupy residues 17 to 37 (LAVR…ILLG), 57 to 77 (ALFY…VLFY), 89 to 109 (ILAI…VAIA), and 119 to 139 (LSWL…LGAG). Arg-140 serves as a coordination point for a 1,2-diacyl-sn-glycero-3-phospho-(1'-sn-glycerol). 3 helical membrane passes run 174 to 194 (QLYE…LYSA), 200 to 220 (GAVT…CEFF), and 233 to 253 (LGIS…IALL).

The protein belongs to the Lgt family.

It is found in the cell inner membrane. It carries out the reaction L-cysteinyl-[prolipoprotein] + a 1,2-diacyl-sn-glycero-3-phospho-(1'-sn-glycerol) = an S-1,2-diacyl-sn-glyceryl-L-cysteinyl-[prolipoprotein] + sn-glycerol 1-phosphate + H(+). Its pathway is protein modification; lipoprotein biosynthesis (diacylglyceryl transfer). Its function is as follows. Catalyzes the transfer of the diacylglyceryl group from phosphatidylglycerol to the sulfhydryl group of the N-terminal cysteine of a prolipoprotein, the first step in the formation of mature lipoproteins. The sequence is that of Phosphatidylglycerol--prolipoprotein diacylglyceryl transferase from Nitrosomonas europaea (strain ATCC 19718 / CIP 103999 / KCTC 2705 / NBRC 14298).